The sequence spans 134 residues: ATP synthase epsilon chain (134 aa).

This sequence belongs to the ATPase epsilon chain family. In terms of assembly, F-type ATPases have 2 components, CF(1) - the catalytic core - and CF(0) - the membrane proton channel. CF(1) has five subunits: alpha(3), beta(3), gamma(1), delta(1), epsilon(1). CF(0) has three main subunits: a, b and c.

The protein resides in the cell membrane. Its function is as follows. Produces ATP from ADP in the presence of a proton gradient across the membrane. The sequence is that of ATP synthase epsilon chain from Clostridium botulinum (strain Alaska E43 / Type E3).